The primary structure comprises 313 residues: GMP synthase [glutamine-hydrolyzing] subunit B (313 aa).

The GMPS ATP-PPase domain occupies 6–190; it reads KVWEKFIEEK…LGLPEKIYNR (185 aa). 33-39 is a binding site for ATP; sequence SGGVDSS.

Heterodimer composed of a glutamine amidotransferase subunit (A) and a GMP-binding subunit (B).

It catalyses the reaction XMP + L-glutamine + ATP + H2O = GMP + L-glutamate + AMP + diphosphate + 2 H(+). It participates in purine metabolism; GMP biosynthesis; GMP from XMP (L-Gln route): step 1/1. Its function is as follows. Catalyzes the synthesis of GMP from XMP. The polypeptide is GMP synthase [glutamine-hydrolyzing] subunit B (guaAB) (Pyrococcus furiosus (strain ATCC 43587 / DSM 3638 / JCM 8422 / Vc1)).